A 575-amino-acid polypeptide reads, in one-letter code: DNA polymerase lambda (575 aa).

A BRCT domain is found at 36-132; it reads EAEEWLSSLR…RLVDVAGFSI (97 aa). The disordered stretch occupies residues 160–205; sequence ALLQTALPPPPSPTRPVSPPQKTKEAPNTQAQPISDDEASDGEETQ. The span at 166–178 shows a compositional bias: pro residues; that stretch reads LPPPPSPTRPVSP. The span at 194 to 203 shows a compositional bias: acidic residues; that stretch reads SDDEASDGEE. A DNA-binding region spans residues 265–279; it reads KAYSVQGDKWRALGY. Lys-312 acts as the Schiff-base intermediate with DNA in catalysis. The segment at 345 to 348 is DNA-binding; that stretch reads GTKT. Residues Arg-386, 417 to 420, and 426 to 429 contribute to the dCTP site; these read SYRR and GDVD. An involved in primer binding region spans residues 420 to 429; it reads RGKATCGDVD. Residues Asp-427, Asp-429, and Asp-490 each contribute to the Mn(2+) site. Positions 466-505 are DNA-binding; sequence ENGQQQKYLGVCRLPGPGWRHRRLDIIVVPYSEFACALLY. Position 513 (Asn-513) interacts with dCTP.

It belongs to the DNA polymerase type-X family. In terms of assembly, interacts with PCNA. Interacts with PAXX; promoting POLL recruitment to double-strand breaks (DSBs) and stimulation of the end-filling activity of POLL. Interacts with XRCC4; promoting POLL recruitment to double-strand breaks (DSBs) and stimulation of the end-filling activity of POLL. Interacts with NHEJ1/XLF; promoting POLL recruitment to double-strand breaks (DSBs) and stimulation of the end-filling activity of POLL. The cofactor is Mn(2+).

The protein localises to the nucleus. It catalyses the reaction DNA(n) + a 2'-deoxyribonucleoside 5'-triphosphate = DNA(n+1) + diphosphate. DNA polymerase that functions in several pathways of DNA repair. Involved in base excision repair (BER) responsible for repair of lesions that give rise to abasic (AP) sites in DNA. Also contributes to DNA double-strand break repair by non-homologous end joining and homologous recombination. Has both template-dependent and template-independent (terminal transferase) DNA polymerase activities. Also has a 5'-deoxyribose-5-phosphate lyase (dRP lyase) activity. The protein is DNA polymerase lambda of Macaca fascicularis (Crab-eating macaque).